The chain runs to 358 residues: Methylthioribose-1-phosphate isomerase (358 aa).

Substrate-binding positions include 54–56 (RGA), R96, and Q205. D246 functions as the Proton donor in the catalytic mechanism. 256–257 (NK) serves as a coordination point for substrate.

It belongs to the eIF-2B alpha/beta/delta subunits family. MtnA subfamily.

It catalyses the reaction 5-(methylsulfanyl)-alpha-D-ribose 1-phosphate = 5-(methylsulfanyl)-D-ribulose 1-phosphate. Its pathway is amino-acid biosynthesis; L-methionine biosynthesis via salvage pathway; L-methionine from S-methyl-5-thio-alpha-D-ribose 1-phosphate: step 1/6. Catalyzes the interconversion of methylthioribose-1-phosphate (MTR-1-P) into methylthioribulose-1-phosphate (MTRu-1-P). In Pseudomonas syringae pv. tomato (strain ATCC BAA-871 / DC3000), this protein is Methylthioribose-1-phosphate isomerase.